A 507-amino-acid polypeptide reads, in one-letter code: Bifunctional purine biosynthesis protein PurH (507 aa).

In terms of domain architecture, MGS-like spans 1–144; it reads MKRALLSVSD…KNSDSVWAVV (144 aa).

The protein belongs to the PurH family.

It catalyses the reaction (6R)-10-formyltetrahydrofolate + 5-amino-1-(5-phospho-beta-D-ribosyl)imidazole-4-carboxamide = 5-formamido-1-(5-phospho-D-ribosyl)imidazole-4-carboxamide + (6S)-5,6,7,8-tetrahydrofolate. It carries out the reaction IMP + H2O = 5-formamido-1-(5-phospho-D-ribosyl)imidazole-4-carboxamide. It functions in the pathway purine metabolism; IMP biosynthesis via de novo pathway; 5-formamido-1-(5-phospho-D-ribosyl)imidazole-4-carboxamide from 5-amino-1-(5-phospho-D-ribosyl)imidazole-4-carboxamide (10-formyl THF route): step 1/1. The protein operates within purine metabolism; IMP biosynthesis via de novo pathway; IMP from 5-formamido-1-(5-phospho-D-ribosyl)imidazole-4-carboxamide: step 1/1. This Lacticaseibacillus paracasei (strain ATCC 334 / BCRC 17002 / CCUG 31169 / CIP 107868 / KCTC 3260 / NRRL B-441) (Lactobacillus paracasei) protein is Bifunctional purine biosynthesis protein PurH.